The following is a 114-amino-acid chain: MGNYISFKKEFGLILVGAIIFTASYLWKDLLLEIEEKYFPKGYGLMWRSIYTILVTVILVLVAIHLKNQFGLVNKDSKDPKDKSIEFDDSPIRDGSSGTPDNSNEPTDLSVETS.

Gly-2 carries the N-myristoyl glycine; by host lipid modification. Transmembrane regions (helical) follow at residues 11-31 (FGLI…KDLL) and 44-64 (GLMW…LVAI). Positions 73 to 114 (VNKDSKDPKDKSIEFDDSPIRDGSSGTPDNSNEPTDLSVETS) are disordered. The span at 75 to 92 (KDSKDPKDKSIEFDDSPI) shows a compositional bias: basic and acidic residues. Positions 96–114 (SSGTPDNSNEPTDLSVETS) are enriched in polar residues.

It is found in the membrane. This is an uncharacterized protein from Acanthamoeba polyphaga (Amoeba).